Here is a 231-residue protein sequence, read N- to C-terminus: PIAGSMVLAAILLKLGGYGIIRMMQIMPTTKTDTFLPFLVLALWGAILANLTCLQQTDLKSLIAYSSISHMGLVVAAIIIQTPWGLSGAMALMIAHGFTSSALFCLANTTYERTHTRILILTRGFHNILPMATTWWLLTNLMNIATPPTMNFTSELLIMSTLFNWCPTTIILLGLSMLITASYSLHMFLSTQTGYPLLNNQTEPTHTREHLLMILHIVPLMMISMKPELVI.

The next 6 helical transmembrane spans lie at 1–21 (PIAG…YGII), 34–54 (TFLP…LTCL), 61–80 (SLIA…AIII), 84–106 (WGLS…LFCL), 118–138 (ILIL…WWLL), and 156–178 (LLIM…LSML).

The protein belongs to the complex I subunit 4 family.

Its subcellular location is the mitochondrion membrane. It carries out the reaction a ubiquinone + NADH + 5 H(+)(in) = a ubiquinol + NAD(+) + 4 H(+)(out). In terms of biological role, core subunit of the mitochondrial membrane respiratory chain NADH dehydrogenase (Complex I) that is believed to belong to the minimal assembly required for catalysis. Complex I functions in the transfer of electrons from NADH to the respiratory chain. The immediate electron acceptor for the enzyme is believed to be ubiquinone. The chain is NADH-ubiquinone oxidoreductase chain 4 (MT-ND4) from Trimeresurus albolabris (White-lipped pit viper).